The sequence spans 374 residues: Envelope glycoprotein M (374 aa).

The Intravirion segment spans residues 1–16 (MKSSKKDIFILHIWLK). A helical membrane pass occupies residues 17–37 (LMGCYVFMFITSVVLPIAAMF). Topologically, residues 38–82 (PNLGFPCYYNTLVDYSKLNLREKNQAQHLTPTLFLEAPEMFFYVT) are virion surface. A helical membrane pass occupies residues 83-103 (YSFIVDCCSLVYYALAAVAVV). At 104-117 (KAKKHAPGLMALSQ) the chain is on the intravirion side. A helical membrane pass occupies residues 118 to 138 (WIMAVGSPTLLYMAVLKLWTI). The Virion surface portion of the chain corresponds to 139–149 (QLYIHTLSYKH). A helical transmembrane segment spans residues 150–170 (IYLAAFVYCLHWLLSMVYTEC). Topologically, residues 171–207 (YITNVSSQWTSSELKKTIPENILLYRVVHVLKPIMMN) are intravirion. A helical membrane pass occupies residues 208 to 228 (VHLSVVALETLIFCLSFMMAI). Residues 229 to 238 (GNSFYVMVSD) are Virion surface-facing. Residues 239–259 (IVFGAINLYLILPIIWYFVTE) form a helical membrane-spanning segment. Residues 260–269 (FWLSKYLPRQ) lie on the Intravirion side of the membrane. Residues 270 to 290 (FGFYFGVLVASIILILPVVRY) traverse the membrane as a helical segment. Topologically, residues 291 to 301 (DKIFVAAQIHR) are virion surface. Residues 302–322 (AVSINIAMIPLCALVALLVRA) form a helical membrane-spanning segment. The Intravirion segment spans residues 323 to 374 (CRVYTDRKKIAYTALPSKPQTIKYTKPIEPSTKQAPDSSIFLEEESDTDFEQ). Residues 345 to 374 (KYTKPIEPSTKQAPDSSIFLEEESDTDFEQ) are disordered. Residues 364-374 (LEEESDTDFEQ) show a composition bias toward acidic residues.

It belongs to the herpesviridae glycoprotein M family. In terms of assembly, interacts (via N-terminus) with gN (via N-terminus). The gM-gN heterodimer forms the gCII complex.

Its subcellular location is the virion membrane. The protein resides in the host Golgi apparatus. The protein localises to the host trans-Golgi network. It localises to the host endosome membrane. It is found in the host nucleus inner membrane. Envelope glycoprotein important for virion assembly and egress. Plays a role in the correct incorporation of gH-gL into virion membrane. Directs the glycoprotein N (gN) to the host trans-Golgi network. The polypeptide is Envelope glycoprotein M (Connochaetes taurinus (Blue wildebeest)).